The following is a 293-amino-acid chain: Ribosomal protein L11 methyltransferase (293 aa).

S-adenosyl-L-methionine-binding residues include Thr-145, Gly-166, Asp-188, and Asn-230.

Belongs to the methyltransferase superfamily. PrmA family.

The protein localises to the cytoplasm. The catalysed reaction is L-lysyl-[protein] + 3 S-adenosyl-L-methionine = N(6),N(6),N(6)-trimethyl-L-lysyl-[protein] + 3 S-adenosyl-L-homocysteine + 3 H(+). Its function is as follows. Methylates ribosomal protein L11. The protein is Ribosomal protein L11 methyltransferase of Salmonella agona (strain SL483).